A 340-amino-acid polypeptide reads, in one-letter code: S-adenosylmethionine:tRNA ribosyltransferase-isomerase (340 aa).

Belongs to the QueA family. In terms of assembly, monomer.

It localises to the cytoplasm. It carries out the reaction 7-aminomethyl-7-carbaguanosine(34) in tRNA + S-adenosyl-L-methionine = epoxyqueuosine(34) in tRNA + adenine + L-methionine + 2 H(+). It participates in tRNA modification; tRNA-queuosine biosynthesis. Functionally, transfers and isomerizes the ribose moiety from AdoMet to the 7-aminomethyl group of 7-deazaguanine (preQ1-tRNA) to give epoxyqueuosine (oQ-tRNA). The sequence is that of S-adenosylmethionine:tRNA ribosyltransferase-isomerase from Campylobacter concisus (strain 13826).